The primary structure comprises 122 residues: Small ribosomal subunit protein uS13 (122 aa).

The disordered stretch occupies residues 93-122; sequence RRGLPVRGQRTKTNARTRKGPKKTIAGKKK.

This sequence belongs to the universal ribosomal protein uS13 family. Part of the 30S ribosomal subunit. Forms a loose heterodimer with protein S19. Forms two bridges to the 50S subunit in the 70S ribosome.

Located at the top of the head of the 30S subunit, it contacts several helices of the 16S rRNA. In the 70S ribosome it contacts the 23S rRNA (bridge B1a) and protein L5 of the 50S subunit (bridge B1b), connecting the 2 subunits; these bridges are implicated in subunit movement. Contacts the tRNAs in the A and P-sites. The polypeptide is Small ribosomal subunit protein uS13 (Corynebacterium urealyticum (strain ATCC 43042 / DSM 7109)).